A 556-amino-acid polypeptide reads, in one-letter code: Putative D-arabinono-1,4-lactone oxidase (556 aa).

Residues 47-217 form the FAD-binding PCMH-type domain; it reads FTSLPELYIQ…TEVTFKAVPA (171 aa). The residue at position 84 (histidine 84) is a Pros-8alpha-FAD histidine.

This sequence belongs to the oxygen-dependent FAD-linked oxidoreductase family. Requires FAD as cofactor.

The protein resides in the mitochondrion membrane. It catalyses the reaction D-arabinono-1,4-lactone + O2 = dehydro-D-arabinono-1,4-lactone + H2O2 + H(+). It participates in cofactor biosynthesis; D-erythroascorbate biosynthesis; dehydro-D-arabinono-1,4-lactone from D-arabinose: step 2/2. This chain is Putative D-arabinono-1,4-lactone oxidase (alo-1), found in Neurospora crassa (strain ATCC 24698 / 74-OR23-1A / CBS 708.71 / DSM 1257 / FGSC 987).